The primary structure comprises 316 residues: Annexin A13 (316 aa).

Residue G2 is the site of N-myristoyl glycine attachment. Annexin repeat units lie at residues F14–D85, R86–Q157, D169–R241, and D245–H316.

This sequence belongs to the annexin family. Monomer and homodimer. Detected in epithelial cells in colon and jejunum (at protein level). Detected in epithelial cells in jejunum.

It localises to the apical cell membrane. The protein resides in the cell membrane. Its subcellular location is the cytoplasmic vesicle. In terms of biological role, binds to membranes enriched in phosphatidylserine or phosphatidylglycerol in a calcium-dependent manner. Half-maximal membrane binding requires about 60 uM calcium. Does not bind to membranes that lack phospholipids with an acidic headgroup. Its function is as follows. Binds to membranes enriched in phosphatidylserine or phosphatidylglycerol in a calcium-dependent manner, but requires higher calcium levels for membrane binding than isoform A. Half-maximal membrane binding requires about 320 uM calcium. The protein is Annexin A13 (ANXA13) of Homo sapiens (Human).